The primary structure comprises 75 residues: Small ribosomal subunit protein bS16 (75 aa).

Belongs to the bacterial ribosomal protein bS16 family.

The protein is Small ribosomal subunit protein bS16 of Campylobacter fetus subsp. fetus (strain 82-40).